Consider the following 203-residue polypeptide: Thymidylate kinase (203 aa).

10–17 is an ATP binding site; the sequence is GIDGSGKS.

It belongs to the thymidylate kinase family.

It carries out the reaction dTMP + ATP = dTDP + ADP. Phosphorylation of dTMP to form dTDP in both de novo and salvage pathways of dTTP synthesis. The chain is Thymidylate kinase from Brachyspira hyodysenteriae (strain ATCC 49526 / WA1).